Here is a 131-residue protein sequence, read N- to C-terminus: Photosystem II extrinsic protein U (131 aa).

A signal peptide spans 1–28 (MKFISRLLVACSLLIGLMGFLGADLAQA). A propeptide spanning residues 29–36 (LTPNPILA) is cleaved from the precursor.

The protein belongs to the PsbU family. As to quaternary structure, PSII is composed of 1 copy each of membrane proteins PsbA, PsbB, PsbC, PsbD, PsbE, PsbF, PsbH, PsbI, PsbJ, PsbK, PsbL, PsbM, PsbT, PsbX, PsbY, PsbZ, Psb30/Ycf12, peripheral proteins PsbO, CyanoQ (PsbQ), PsbU, PsbV and a large number of cofactors. It forms dimeric complexes.

The protein resides in the cellular thylakoid membrane. Functionally, one of the extrinsic, lumenal subunits of photosystem II (PSII). PSII is a light-driven water plastoquinone oxidoreductase, using light energy to abstract electrons from H(2)O, generating a proton gradient subsequently used for ATP formation. The extrinsic proteins stabilize the structure of photosystem II oxygen-evolving complex (OEC), the ion environment of oxygen evolution and protect the OEC against heat-induced inactivation. May modulate the Cl(-) requirement for oxygen evolution. The chain is Photosystem II extrinsic protein U from Synechocystis sp. (strain ATCC 27184 / PCC 6803 / Kazusa).